A 424-amino-acid chain; its full sequence is Formyl-CoA:oxalate CoA-transferase (424 aa).

CoA is bound by residues 17–18 (QS), Arg-38, 96–98 (NFA), Arg-104, and 136–139 (KVYE). Residue Asp-168 is the Nucleophile of the active site. Position 247–249 (247–249 (GGQ)) interacts with substrate.

Belongs to the CoA-transferase III family. Frc subfamily. In terms of assembly, homodimer.

It catalyses the reaction formyl-CoA + oxalate = oxalyl-CoA + formate. The protein operates within metabolic intermediate degradation; oxalate degradation; CO(2) and formate from oxalate: step 1/2. Functionally, involved in the catabolism of oxalate and in the adapatation to low pH via the induction of the oxalate-dependent acid tolerance response (ATR). Catalyzes the transfer of the CoA moiety from formyl-CoA to oxalate. This Afipia carboxidovorans (strain ATCC 49405 / DSM 1227 / KCTC 32145 / OM5) (Oligotropha carboxidovorans) protein is Formyl-CoA:oxalate CoA-transferase.